Reading from the N-terminus, the 620-residue chain is ATP-dependent RNA helicase ROK1 (620 aa).

Positions 53 to 115 (SSLDFFGDHP…PLPKSLHTNL (63 aa)) are disordered. The span at 58-70 (FGDHPHPQHKPEP) shows a compositional bias: basic and acidic residues. Acidic residues predominate over residues 71–82 (EPESESESDFES). The Q motif motif lies at 142 to 150 (NIHSLWGVQ). In terms of domain architecture, Helicase ATP-binding spans 154–382 (GGCLLEDRDT…KKWLKDGGVR (229 aa)). 167–174 (APTGSGKT) serves as a coordination point for ATP. The tract at residues 244 to 292 (ESAPGEAVKTGEDGDSEMKDGEDSGDEEEDEDDNESTGSVDEFAPKVSG) is disordered. The span at 252–265 (KTGEDGDSEMKDGE) shows a compositional bias: basic and acidic residues. Residues 266–278 (DSGDEEEDEDDNE) show a composition bias toward acidic residues. Positions 329–332 (DESD) match the DEAD box motif. Residues 394–556 (TVDQSLLYTG…PVPEYMLDMK (163 aa)) form the Helicase C-terminal domain. A disordered region spans residues 556-620 (KKPTKNEKKK…GNEEKNDDEE (65 aa)). Basic residues predominate over residues 562-575 (EKKKLAKAPPKRKA). 2 stretches are compositionally biased toward basic and acidic residues: residues 582-598 (DLNR…VEAS) and 605-614 (ERKGKGGNEE).

It belongs to the DEAD box helicase family. DDX52/ROK1 subfamily. As to quaternary structure, interacts with the U3 snoRNA and is associated with the 90S and 40S pre-ribosomes.

The protein localises to the nucleus. Its subcellular location is the nucleolus. The enzyme catalyses ATP + H2O = ADP + phosphate + H(+). ATP-dependent RNA helicase involved in 40S ribosomal subunit biogenesis. Required for the processing and cleavage of 35S pre-rRNA at sites A0, A1, and A2, leading to mature 18S rRNA. This is ATP-dependent RNA helicase ROK1 (ROK1) from Cryptococcus neoformans var. neoformans serotype D (strain B-3501A) (Filobasidiella neoformans).